A 259-amino-acid chain; its full sequence is Archaerhodopsin-2 (259 aa).

The propeptide occupies 1 to 6 (MDPIAL). A Pyrrolidone carboxylic acid modification is found at Q7. Residues 7 to 18 (QAGFDLLNDGRP) lie on the Extracellular side of the membrane. A helical transmembrane segment spans residues 19-40 (ETLWLGIGTLLMLIGTFYFIAR). The Cytoplasmic segment spans residues 41–49 (GWGVTDKEA). The helical transmembrane segment at 50-71 (REYYAITILVPGIASAAYLAMF) threads the bilayer. At 72–90 (FGIGVTEVELASGTVLDIY) the chain is on the extracellular side. Residues 91 to 112 (YARYADWLFTTPLLLLDLALLA) traverse the membrane as a helical segment. The Cytoplasmic segment spans residues 113–115 (KVD). A helical transmembrane segment spans residues 116 to 138 (RVTIGTLIGVDALMIVTGLIGAL). Residues 139 to 142 (SKTP) are Extracellular-facing. A helical membrane pass occupies residues 143 to 171 (LARYTWWLFSTIAFLFVLYYLLTSLRSAA). The Cytoplasmic portion of the chain corresponds to 172 to 174 (AKR). The helical transmembrane segment at 175-203 (SEEVRSTFNTLTALVAVLWTAYPILWIVG) threads the bilayer. Residues 204 to 211 (TEGAGVVG) lie on the Extracellular side of the membrane. The helical transmembrane segment at 212-244 (LGIETLAFMVLDVTAKVGFGFVLLRSRAILGET) threads the bilayer. K227 bears the N6-(retinylidene)lysine mark. At 245 to 259 (EAPEPSAGADASAAD) the chain is on the cytoplasmic side.

The protein belongs to the archaeal/bacterial/fungal opsin family.

Its subcellular location is the cell membrane. In terms of biological role, light-driven proton pump. It may interact with bacterioruberin in the claret membrane. This chain is Archaerhodopsin-2, found in Halobacterium sp. (strain aus-2).